Consider the following 60-residue polypeptide: VLCPAWLFLDVLFSTASIMHLCAISVDRYIAIKKPIQANQYNSRATAFIKITVVWLISIG.

Residues 1–4 (VLCP) lie on the Extracellular side of the membrane. A helical membrane pass occupies residues 5-26 (AWLFLDVLFSTASIMHLCAISV). Residues aspartate 10 and threonine 15 each coordinate ergotamine. The short motif at 27–29 (DRY) is the DRY motif; important for ligand-induced conformation changes element. Topologically, residues 27-46 (DRYIAIKKPIQANQYNSRAT) are cytoplasmic. Residues 47–60 (AFIKITVVWLISIG) traverse the membrane as a helical segment.

It belongs to the G-protein coupled receptor 1 family. In terms of assembly, interacts (via C-terminus) with MPDZ. In terms of tissue distribution, detected in aorta, renal artery, jugular vein, vena cava and femoral vein.

It localises to the cell membrane. The protein resides in the synapse. The protein localises to the synaptosome. Its function is as follows. G-protein coupled receptor for 5-hydroxytryptamine (serotonin). Also functions as a receptor for various ergot alkaloid derivatives and psychoactive substances. Ligand binding causes a conformation change that triggers signaling via guanine nucleotide-binding proteins (G proteins) and modulates the activity of downstream effectors. HTR2B is coupled to G(q)/G(11) G alpha proteins and activates phospholipase C-beta, releasing diacylglycerol (DAG) and inositol 1,4,5-trisphosphate (IP3) second messengers that modulate the activity of phosphatidylinositol 3-kinase and promote the release of Ca(2+) ions from intracellular stores, respectively. Beta-arrestin family members inhibit signaling via G proteins and mediate activation of alternative signaling pathways. Plays a role in the regulation of dopamine and 5-hydroxytryptamine release, 5-hydroxytryptamine uptake and in the regulation of extracellular dopamine and 5-hydroxytryptamine levels, and thereby affects neural activity. May play a role in the perception of pain. Plays a role in the regulation of behavior, including impulsive behavior. Required for normal proliferation of embryonic cardiac myocytes and normal heart development. Protects cardiomyocytes against apoptosis. Plays a role in the adaptation of pulmonary arteries to chronic hypoxia. Plays a role in vasoconstriction. Required for normal osteoblast function and proliferation, and for maintaining normal bone density. Required for normal proliferation of the interstitial cells of Cajal in the intestine. The protein is 5-hydroxytryptamine receptor 2B (HTR2B) of Sus scrofa (Pig).